The sequence spans 101 residues: Large ribosomal subunit protein uL23 (101 aa).

This sequence belongs to the universal ribosomal protein uL23 family. In terms of assembly, part of the 50S ribosomal subunit. Contacts protein L29, and trigger factor when it is bound to the ribosome.

Functionally, one of the early assembly proteins it binds 23S rRNA. One of the proteins that surrounds the polypeptide exit tunnel on the outside of the ribosome. Forms the main docking site for trigger factor binding to the ribosome. This Lactobacillus helveticus (strain DPC 4571) protein is Large ribosomal subunit protein uL23.